A 185-amino-acid chain; its full sequence is Ribosome-recycling factor (185 aa).

Belongs to the RRF family.

Its subcellular location is the cytoplasm. Its function is as follows. Responsible for the release of ribosomes from messenger RNA at the termination of protein biosynthesis. May increase the efficiency of translation by recycling ribosomes from one round of translation to another. The polypeptide is Ribosome-recycling factor (Streptococcus suis (strain 98HAH33)).